Consider the following 174-residue polypeptide: ATP-dependent protease subunit HslV (174 aa).

T2 is an active-site residue. A156, C159, and T162 together coordinate Na(+).

It belongs to the peptidase T1B family. HslV subfamily. As to quaternary structure, a double ring-shaped homohexamer of HslV is capped on each side by a ring-shaped HslU homohexamer. The assembly of the HslU/HslV complex is dependent on binding of ATP.

It is found in the cytoplasm. The enzyme catalyses ATP-dependent cleavage of peptide bonds with broad specificity.. Allosterically activated by HslU binding. Functionally, protease subunit of a proteasome-like degradation complex believed to be a general protein degrading machinery. This Agrobacterium fabrum (strain C58 / ATCC 33970) (Agrobacterium tumefaciens (strain C58)) protein is ATP-dependent protease subunit HslV.